Reading from the N-terminus, the 556-residue chain is Dihydroxy-acid dehydratase (556 aa).

Aspartate 78 serves as a coordination point for Mg(2+). Residue cysteine 119 participates in [2Fe-2S] cluster binding. Mg(2+) is bound by residues aspartate 120 and lysine 121. Position 121 is an N6-carboxylysine (lysine 121). Cysteine 191 is a binding site for [2Fe-2S] cluster. Glutamate 442 provides a ligand contact to Mg(2+). The active-site Proton acceptor is the serine 468.

The protein belongs to the IlvD/Edd family. In terms of assembly, homodimer. The cofactor is [2Fe-2S] cluster. Mg(2+) is required as a cofactor.

It catalyses the reaction (2R)-2,3-dihydroxy-3-methylbutanoate = 3-methyl-2-oxobutanoate + H2O. The catalysed reaction is (2R,3R)-2,3-dihydroxy-3-methylpentanoate = (S)-3-methyl-2-oxopentanoate + H2O. The protein operates within amino-acid biosynthesis; L-isoleucine biosynthesis; L-isoleucine from 2-oxobutanoate: step 3/4. Its pathway is amino-acid biosynthesis; L-valine biosynthesis; L-valine from pyruvate: step 3/4. Its function is as follows. Functions in the biosynthesis of branched-chain amino acids. Catalyzes the dehydration of (2R,3R)-2,3-dihydroxy-3-methylpentanoate (2,3-dihydroxy-3-methylvalerate) into 2-oxo-3-methylpentanoate (2-oxo-3-methylvalerate) and of (2R)-2,3-dihydroxy-3-methylbutanoate (2,3-dihydroxyisovalerate) into 2-oxo-3-methylbutanoate (2-oxoisovalerate), the penultimate precursor to L-isoleucine and L-valine, respectively. The polypeptide is Dihydroxy-acid dehydratase (Clostridium beijerinckii (strain ATCC 51743 / NCIMB 8052) (Clostridium acetobutylicum)).